The chain runs to 225 residues: Chromosome partition protein MukE (225 aa).

Residues 197–225 are disordered; that stretch reads RDGEAMPIENHLQLNDETEESQPDSGEEE. Positions 212 to 225 are enriched in acidic residues; that stretch reads DETEESQPDSGEEE.

This sequence belongs to the MukE family. In terms of assembly, interacts, and probably forms a ternary complex, with MukF and MukB. The complex formation is stimulated by calcium or magnesium.

It is found in the cytoplasm. The protein localises to the nucleoid. Its function is as follows. Involved in chromosome condensation, segregation and cell cycle progression. May participate in facilitating chromosome segregation by condensation DNA from both sides of a centrally located replisome during cell division. Probably acts via its interaction with MukB and MukF. This chain is Chromosome partition protein MukE, found in Salmonella typhi.